The sequence spans 196 residues: ATP-dependent Clp protease proteolytic subunit (196 aa).

The Nucleophile role is filled by serine 101. The active site involves histidine 126.

The protein belongs to the peptidase S14 family. Component of the chloroplastic Clp protease core complex.

It localises to the plastid. The protein resides in the chloroplast stroma. The catalysed reaction is Hydrolysis of proteins to small peptides in the presence of ATP and magnesium. alpha-casein is the usual test substrate. In the absence of ATP, only oligopeptides shorter than five residues are hydrolyzed (such as succinyl-Leu-Tyr-|-NHMec, and Leu-Tyr-Leu-|-Tyr-Trp, in which cleavage of the -Tyr-|-Leu- and -Tyr-|-Trp bonds also occurs).. In terms of biological role, cleaves peptides in various proteins in a process that requires ATP hydrolysis. Has a chymotrypsin-like activity. Plays a major role in the degradation of misfolded proteins. In Pleurastrum terricola (Filamentous green alga), this protein is ATP-dependent Clp protease proteolytic subunit.